Reading from the N-terminus, the 150-residue chain is uncharacterized protein (150 aa).

The protein resides in the plastid. It localises to the chloroplast. This is an uncharacterized protein from Pyropia yezoensis (Susabi-nori).